The sequence spans 187 residues: MDVILLERVEKLGQMGQVVKVKPGFARNFLLPQKKALRATKENLAYFETQKARLEARNLELRKEAEQVAGSMGNVSVVITRQSGETGQLYGSVSSRDIADALAEKQIQVERRQVAIDQPIKTLGLFPVRIVLHPEVFVTITVNVARSADEAELQAQRGGMVTGLREEDEEEEVEETATEEGGEETAA.

The interval 155–187 is disordered; that stretch reads AQRGGMVTGLREEDEEEEVEETATEEGGEETAA. Residues 166 to 187 show a composition bias toward acidic residues; it reads EEDEEEEVEETATEEGGEETAA.

It belongs to the bacterial ribosomal protein bL9 family.

In terms of biological role, binds to the 23S rRNA. This is Large ribosomal subunit protein bL9 from Rhodospirillum centenum (strain ATCC 51521 / SW).